The sequence spans 902 residues: DNA mismatch repair protein MutS (902 aa).

An ATP-binding site is contributed by 654 to 661 (GPNMGGKS).

It belongs to the DNA mismatch repair MutS family.

In terms of biological role, this protein is involved in the repair of mismatches in DNA. It is possible that it carries out the mismatch recognition step. This protein has a weak ATPase activity. The polypeptide is DNA mismatch repair protein MutS (Xanthomonas axonopodis pv. citri (strain 306)).